A 233-amino-acid chain; its full sequence is Antilisterial bacteriocin subtilosin biosynthesis protein AlbG (233 aa).

6 helical membrane-spanning segments follow: residues 7 to 27, 46 to 66, 116 to 136, 145 to 165, 176 to 198, and 203 to 220; these read FTLL…VQAV, GLLA…LHYV, TYVM…FEIV, TPPA…LFCM, GSLF…MLSF, and LLFL…SFIY.

It is found in the cell membrane. Involved in the production of the bacteriocin subtilosin. This chain is Antilisterial bacteriocin subtilosin biosynthesis protein AlbG (albG), found in Bacillus subtilis (strain 168).